The sequence spans 294 residues: MSSLRQIAFYGKGGIGKSTTSQNTLAALAEMGQKILIVGCDPKADSTRLILHAKAQDTILSLAASAGSVEDLELEDVMKVGYKDIRCVESGGPEPGVGCAGRGVITSINFLEENGAYENIDYVSYDVLGDVVCGGFAMPIRENKAQEIYIVMSGEMMAMYAANNISKGILKYANSGGVRLGGLICNERQTDKELELAEALAKKLGTQLIYFVPRDNVVQHAELRRMTVLEYAPESQQADHYRNLATKVHNNGGKGIIPTPISMDELEDMLMEHGIMKPVDESIVGKTAAELAAS.

Residue 11-18 (GKGGIGKS) participates in ATP binding. [4Fe-4S] cluster is bound at residue C99. R102 carries the ADP-ribosylarginine; by dinitrogenase reductase ADP-ribosyltransferase modification. Residue C133 participates in [4Fe-4S] cluster binding.

This sequence belongs to the NifH/BchL/ChlL family. Homodimer. Requires [4Fe-4S] cluster as cofactor. In terms of processing, the reversible ADP-ribosylation of Arg-102 inactivates the nitrogenase reductase and regulates nitrogenase activity.

The enzyme catalyses N2 + 8 reduced [2Fe-2S]-[ferredoxin] + 16 ATP + 16 H2O = H2 + 8 oxidized [2Fe-2S]-[ferredoxin] + 2 NH4(+) + 16 ADP + 16 phosphate + 6 H(+). The key enzymatic reactions in nitrogen fixation are catalyzed by the nitrogenase complex, which has 2 components: the iron protein and the molybdenum-iron protein. This is Nitrogenase iron protein (nifH) from Bradyrhizobium sp. (strain ANU 289).